The following is a 157-amino-acid chain: Heat shock 22 kDa protein, chloroplastic (157 aa).

Positions 40-155 constitute a sHSP domain; that stretch reads GKAGHTHAPM…KPEPKRIAVT (116 aa).

It belongs to the small heat shock protein (HSP20) family.

The protein resides in the plastid. It is found in the chloroplast. This chain is Heat shock 22 kDa protein, chloroplastic, found in Chlamydomonas reinhardtii (Chlamydomonas smithii).